Here is a 113-residue protein sequence, read N- to C-terminus: Small ribosomal subunit protein eS24 (113 aa).

Belongs to the eukaryotic ribosomal protein eS24 family.

This Metallosphaera sedula (strain ATCC 51363 / DSM 5348 / JCM 9185 / NBRC 15509 / TH2) protein is Small ribosomal subunit protein eS24.